The sequence spans 931 residues: 3'-5' exonuclease DinG (931 aa).

Positions 7–162 (VVIDVETTGN…DSDAEVTGLI (156 aa)) constitute an Exonuclease domain. The Helicase ATP-binding domain maps to 250–510 (LSELMPGYEK…KKMRQLFQRN (261 aa)). 284–291 (APPGIGKT) serves as a coordination point for ATP. Residues 462-465 (DEAH) carry the DEAH box motif. Residues 741-897 (DTARYIELMA…TIIILDRRIK (157 aa)) enclose the Helicase C-terminal domain.

It belongs to the helicase family. DinG subfamily. Type 2 sub-subfamily.

The protein localises to the cytoplasm. 3'-5' exonuclease. The polypeptide is 3'-5' exonuclease DinG (Bacillus subtilis (strain 168)).